A 186-amino-acid polypeptide reads, in one-letter code: Ribosome-recycling factor (186 aa).

The protein belongs to the RRF family.

It localises to the cytoplasm. In terms of biological role, responsible for the release of ribosomes from messenger RNA at the termination of protein biosynthesis. May increase the efficiency of translation by recycling ribosomes from one round of translation to another. The polypeptide is Ribosome-recycling factor (Burkholderia thailandensis (strain ATCC 700388 / DSM 13276 / CCUG 48851 / CIP 106301 / E264)).